Reading from the N-terminus, the 868-residue chain is DNA mismatch repair protein MutS (868 aa).

Residue Gly620–Ser627 coordinates ATP.

This sequence belongs to the DNA mismatch repair MutS family.

Functionally, this protein is involved in the repair of mismatches in DNA. It is possible that it carries out the mismatch recognition step. This protein has a weak ATPase activity. The chain is DNA mismatch repair protein MutS from Xylella fastidiosa (strain Temecula1 / ATCC 700964).